The sequence spans 162 residues: Large ribosomal subunit protein uL15 (162 aa).

Residues 1–10 (MNLNELRDNA) show a composition bias toward basic and acidic residues. Residues 1 to 39 (MNLNELRDNAGSRYRKKRLGRGIGSGKGKTSGKGVKGQK) form a disordered region. The segment covering 21–35 (RGIGSGKGKTSGKGV) has biased composition (gly residues).

It belongs to the universal ribosomal protein uL15 family. As to quaternary structure, part of the 50S ribosomal subunit.

Functionally, binds to the 23S rRNA. The chain is Large ribosomal subunit protein uL15 from Gluconacetobacter diazotrophicus (strain ATCC 49037 / DSM 5601 / CCUG 37298 / CIP 103539 / LMG 7603 / PAl5).